A 214-amino-acid chain; its full sequence is Methyltransferase HEMK2 (214 aa).

The S-adenosyl-L-homocysteine site is built by Thr29, Glu51, Gly53, Asp77, Asp103, Leu104, and Asn122. The S-adenosyl-L-methionine site is built by Thr29, Glu51, Gly53, Asp77, Asp103, Leu104, and Asn122. Asn122 contacts a protein.

Belongs to the eukaryotic/archaeal PrmC-related family. As to quaternary structure, heterodimer; heterodimerization with TRMT112 is required for S-adenosyl-L-methionine-binding. In terms of assembly, does not interact with TRMT112. In terms of processing, ubiquitinated, leading to its degradation by the proteasome. In terms of tissue distribution, widely expressed, with highest expression in parathyroid and pituitary glands, followed by adrenal gland and kidney, and lowest expression in leukocytes and mammary gland.

The protein localises to the nucleus. The enzyme catalyses L-lysyl-[histone] + S-adenosyl-L-methionine = N(6)-methyl-L-lysyl-[histone] + S-adenosyl-L-homocysteine + H(+). It catalyses the reaction L-glutaminyl-[protein] + S-adenosyl-L-methionine = N(5)-methyl-L-glutaminyl-[protein] + S-adenosyl-L-homocysteine + H(+). It carries out the reaction methylarsonous acid + S-adenosyl-L-methionine = dimethylarsinate + S-adenosyl-L-homocysteine + 2 H(+). In terms of biological role, methyltransferase that can methylate proteins and, to a lower extent, arsenic. Catalytic subunit of a heterodimer with TRMT112, which monomethylates 'Lys-12' of histone H4 (H4K12me1), a modification present at the promoters of numerous genes encoding cell cycle regulators. Catalytic subunit of a heterodimer with TRMT112, which catalyzes N5-methylation of Glu residue of proteins with a Gly-Gln-Xaa-Xaa-Xaa-Arg motif. Methylates ETF1 on 'Gln-185'; ETF1 needs to be complexed to ERF3 in its GTP-bound form to be efficiently methylated. May also play a role in the modulation of arsenic-induced toxicity by mediating the conversion of monomethylarsonous acid (3+) into the less toxic dimethylarsonic acid. It however only plays a limited role in arsenic metabolism compared with AS3MT. This is Methyltransferase HEMK2 from Homo sapiens (Human).